The chain runs to 357 residues: U5 small nuclear ribonucleoprotein 40 kDa protein (357 aa).

K18 is covalently cross-linked (Glycyl lysine isopeptide (Lys-Gly) (interchain with G-Cter in SUMO2)). R21 carries the post-translational modification Asymmetric dimethylarginine. WD repeat units follow at residues 64–103, 107–146, 149–189, 191–230, 233–272, 283–322, and 325–357; these read GHEG…DNYA, GHSG…RVKR, GHTS…AIQT, QNTY…LTYT, GHAD…PKER, NFEK…ILYK, and GHAG…GEIQ. Residue K270 forms a Glycyl lysine isopeptide (Lys-Gly) (interchain with G-Cter in SUMO2) linkage.

As to quaternary structure, component of the pre-catalytic and catalytic spliceosome complexes. Component of the postcatalytic spliceosome P complex. Part of the U5 snRNP complex. Interacts with PRPF8. Component of the U4/U6-U5 tri-snRNP complex composed of the U4, U6 and U5 snRNAs and at least PRPF3, PRPF4, PRPF6, PRPF8, PRPF31, SNRNP200, TXNL4A, WDR57, SNRNP40, DDX23, CD2BP2, PPIH, SNU13, EFTUD2, SART1 and USP39. Component of the minor spliceosome, which splices U12-type introns.

The protein localises to the nucleus. Functionally, required for pre-mRNA splicing as component of the activated spliceosome. Component of the U5 small nuclear ribonucleoprotein (snRNP) complex and the U4/U6-U5 tri-snRNP complex, building blocks of the spliceosome. As a component of the minor spliceosome, involved in the splicing of U12-type introns in pre-mRNAs. In Homo sapiens (Human), this protein is U5 small nuclear ribonucleoprotein 40 kDa protein (SNRNP40).